The chain runs to 1222 residues: Kinesin-related protein 9 (1222 aa).

The segment covering 1–25 (MDNNNNNFSTPKQPTINSTTGGQLR) has biased composition (polar residues). Disordered regions lie at residues 1-55 (MDNN…ITNS), 75-165 (MDSL…STNI), and 188-343 (SSNT…TQPL). Residues 26–55 (SRSNSSPSTSSISTPRNGSTTATTSSITNS) show a composition bias toward low complexity. Residues 75–85 (MDSLSTPMSQS) show a composition bias toward polar residues. Low complexity-rich tracts occupy residues 122-165 (SFIS…STNI), 194-209 (SSLP…PLSN), 216-238 (NHHL…ISTT), and 254-325 (NLTT…RTPI). A compositionally biased stretch (polar residues) spans 326–343 (QNFNSVGGVNITSKTQPL). The 370-residue stretch at 350–719 (SIQAVCRFRP…LNFGQRAQSV (370 aa)) folds into the Kinesin motor domain. 438-445 (GQTGAGKT) is an ATP binding site. A coiled-coil region spans residues 724–1026 (LQNVEESHSE…DTLTNKLEIQ (303 aa)). The segment at 1144–1174 (NINNNNNIKNNNNNNKLKSKKVGSSSSSSSN) is disordered. The chain crosses the membrane as a helical span at residues 1183 to 1203 (ILFFLIILVILFFLMVAVGLT).

This sequence belongs to the TRAFAC class myosin-kinesin ATPase superfamily. Kinesin family.

It is found in the membrane. The protein localises to the cytoplasm. It localises to the cytoskeleton. Functionally, microtubule-associated force-producing protein that plays a role in organelle transport. Its motor activity is directed toward the microtubule's plus end. The chain is Kinesin-related protein 9 (kif9) from Dictyostelium discoideum (Social amoeba).